The sequence spans 122 residues: Large ribosomal subunit protein uL14 (122 aa).

This sequence belongs to the universal ribosomal protein uL14 family. As to quaternary structure, part of the 50S ribosomal subunit. Forms a cluster with proteins L3 and L19. In the 70S ribosome, L14 and L19 interact and together make contacts with the 16S rRNA in bridges B5 and B8.

Functionally, binds to 23S rRNA. Forms part of two intersubunit bridges in the 70S ribosome. This Streptococcus pyogenes serotype M2 (strain MGAS10270) protein is Large ribosomal subunit protein uL14.